A 234-amino-acid polypeptide reads, in one-letter code: Geranylgeranylglyceryl phosphate synthase (234 aa).

Mg(2+) is bound by residues Asp-24 and Ser-52. Sn-glycerol 1-phosphate-binding positions include 172-178 (YLEAGSG), 203-204 (GG), and 225-226 (GT).

Belongs to the GGGP/HepGP synthase family. Group II subfamily. In terms of assembly, homodimer. It depends on Mg(2+) as a cofactor.

It carries out the reaction sn-glycerol 1-phosphate + (2E,6E,10E)-geranylgeranyl diphosphate = sn-3-O-(geranylgeranyl)glycerol 1-phosphate + diphosphate. In terms of biological role, prenyltransferase that catalyzes the transfer of the geranylgeranyl moiety of geranylgeranyl diphosphate (GGPP) to the C3 hydroxyl of sn-glycerol-1-phosphate (G1P). The protein is Geranylgeranylglyceryl phosphate synthase of Zunongwangia profunda (strain DSM 18752 / CCTCC AB 206139 / SM-A87) (Wangia profunda).